The primary structure comprises 293 residues: Fructose-bisphosphate aldolase (293 aa).

S50 is a binding site for D-glyceraldehyde 3-phosphate. The active-site Proton donor is the D85. Zn(2+) contacts are provided by H86, D106, E136, and H178. G179 is a dihydroxyacetone phosphate binding site. H208 lines the Zn(2+) pocket. Residues 209 to 211 and 230 to 233 contribute to the dihydroxyacetone phosphate site; these read GGS and NVNT.

This sequence belongs to the class II fructose-bisphosphate aldolase family. It depends on Zn(2+) as a cofactor.

The enzyme catalyses beta-D-fructose 1,6-bisphosphate = D-glyceraldehyde 3-phosphate + dihydroxyacetone phosphate. It participates in carbohydrate degradation; glycolysis; D-glyceraldehyde 3-phosphate and glycerone phosphate from D-glucose: step 4/4. In terms of biological role, catalyzes the aldol condensation of dihydroxyacetone phosphate (DHAP or glycerone-phosphate) with glyceraldehyde 3-phosphate (G3P) to form fructose 1,6-bisphosphate (FBP) in gluconeogenesis and the reverse reaction in glycolysis. The polypeptide is Fructose-bisphosphate aldolase (fba) (Streptococcus pyogenes serotype M3 (strain ATCC BAA-595 / MGAS315)).